The chain runs to 269 residues: Gene 51 glycoprotein (269 aa).

N-linked (GlcNAc...) asparagine; by host glycans are attached at residues N53, N58, N74, and N78. Disordered stretches follow at residues 67 to 87 and 103 to 137; these read LSTS…TTPY and MLNS…ASKN. Low complexity predominate over residues 76-87; that stretch reads TSNTSYSQTTPY. Polar residues predominate over residues 103–112; sequence MLNSTPNKPL. The span at 113–136 shows a compositional bias: low complexity; sequence SSTKLTPKSQSSSQSTKTTKQASK. Residues N137, N161, N170, and N191 are each glycosylated (N-linked (GlcNAc...) asparagine; by host).

The chain is Gene 51 glycoprotein (51) from Saimiriine herpesvirus 2 (strain 11) (SaHV-2).